Consider the following 119-residue polypeptide: Holo-[acyl-carrier-protein] synthase (119 aa).

Residues D8 and E59 each coordinate Mg(2+).

Belongs to the P-Pant transferase superfamily. AcpS family. It depends on Mg(2+) as a cofactor.

It is found in the cytoplasm. It carries out the reaction apo-[ACP] + CoA = holo-[ACP] + adenosine 3',5'-bisphosphate + H(+). Its function is as follows. Transfers the 4'-phosphopantetheine moiety from coenzyme A to a Ser of acyl-carrier-protein. The polypeptide is Holo-[acyl-carrier-protein] synthase (Lactococcus lactis subsp. cremoris (strain SK11)).